A 560-amino-acid chain; its full sequence is Solute carrier family 22 member 6 (560 aa).

The Cytoplasmic portion of the chain corresponds to 1 to 15 (MAFSDLLEQVGSTGR). The chain crosses the membrane as a helical span at residues 16–36 (FQVLHVTLLSMPILMMASHNL). The Extracellular segment spans residues 37–143 (LQNFVAAVPP…LVCDYRALKQ (107 aa)). A helical transmembrane segment spans residues 144–164 (MSQTTYMGGVLVGAIVFGGLS). The Cytoplasmic segment spans residues 165–170 (DRFGRR). A helical transmembrane segment spans residues 171-191 (VLLLISNLMMAIGGTCVAFST). At 192 to 201 (SFTMFCVFRV) the chain is on the extracellular side. A helical transmembrane segment spans residues 202–222 (CCGMALSGLVLNSFSLIVEWI). At 223–228 (PTRVRT) the chain is on the cytoplasmic side. Residues 229 to 249 (VVGTGTGYCYTTGQLILAAVA) form a helical membrane-spanning segment. At 250–256 (YCIRDWR) the chain is on the extracellular side. The helical transmembrane segment at 257–277 (WLTLAVSLPFYVSFLYSWWFL) threads the bilayer. The Cytoplasmic segment spans residues 278-345 (ESARWLVLTK…DLLRTSTMRT (68 aa)). The helical transmembrane segment at 346–366 (ITICLSAVWFSTSFAYYGLSM) threads the bilayer. Topologically, residues 367–374 (DLQKFGVS) are extracellular. A helical membrane pass occupies residues 375–395 (IYLIQIIFGAVDIPAKIIVTI). The Cytoplasmic segment spans residues 396–406 (CMSMLGRRPSQ). A helical membrane pass occupies residues 407 to 427 (CGALVLAGIMILINLLVPSDL). Residues 428 to 433 (QMLRTS) lie on the Extracellular side of the membrane. Residues 434 to 454 (LAVIGKGCLAASFNCCYLYAG) traverse the membrane as a helical segment. Topologically, residues 455 to 465 (ELYPTVIRQSG) are cytoplasmic. Residues 466-486 (MGWVSMMARFGAMVAPMVLLL) form a helical membrane-spanning segment. Residues 487–491 (GDDYP) lie on the Extracellular side of the membrane. A helical membrane pass occupies residues 492–512 (WIPGFIYGGAPIVSGIFAFFL). Over 513 to 560 (PETLSQPLPDTIQDIDDRGLARTNSKRLPEKLDLAMKDPSCVLLKESV) the chain is Cytoplasmic.

Belongs to the major facilitator (TC 2.A.1) superfamily. Organic cation transporter (TC 2.A.1.19) family. In terms of processing, glycosylated. Glycosylation is necessary for proper targeting of the transporter to the plasma membrane.

It localises to the cell membrane. The protein resides in the basolateral cell membrane. Its subcellular location is the basal cell membrane. Functionally, involved in the renal elimination of endogenous and exogenous organic anions. Functions as organic anion exchanger when the uptake of one molecule of organic anion is coupled with an efflux of one molecule of endogenous dicarboxylic acid (glutarate, ketoglutarate, etc). Mediates the sodium-independent uptake of p-aminohippurate (PAH), 2,3-dimercapto-1-propanesulfonic acid (DMPS), cidofovir, adefovir, 9-(2-phosphonylmethoxyethyl) guanine (PMEG), 9-(2-phosphonylmethoxyethyl) diaminopurine (PMEDAP), ochratoxin (OTA), acyclovir (ACV), 3'-azido-3-'deoxythymidine (AZT), cimetidine (CMD), 2,4-dichloro-phenoxyacetate (2,4-D), hippurate (HA), indoleacetate (IA), indoxyl sulfate (IS) and 3-carboxy-4-methyl-5-propyl-2-furanpropionate (CMPF) and edaravone sulfate. PAH uptake is inhibited by p-chloromercuribenzenesulphonate (PCMBS), diethyl pyrocarbonate (DEPC), indomethacin, sulindac, diclofenac, carprofen, okadaic acid, benzothiazolylcysteine (BTC), S-chlorotrifluoroethylcysteine (CTFC), cysteine S-conjugates S-dichlorovinylcysteine (DCVC), furosemide, steviol, phorbol 12-myristate 13-acetate (PMA), calcium ionophore A23187, benzylpenicillin, bumetamide, losartan, probenecid, phenol red, urate, glutarate and alpha-ketoglutarate. The protein is Solute carrier family 22 member 6 (slc22a6) of Danio rerio (Zebrafish).